Reading from the N-terminus, the 284-residue chain is MNCPIFLWRIYKYIVHLFTGRSEIERICYNIELKSLDRLALIETSVDYSKQLVHIKKDMKSEFDPGDVAIKIVEIKGFNQELLAFDSIILPNLISALEPISLFQGLKKSIEKKQKIPYDNNNLEHEASLERLWEALLPDVRRSARLSKEWGTLGFQGMDPATDFRGMGILGLDNLIYFSTQHSEDAREILKNSNSKCCYPFAITGINITALVLNLIDKPHFKIYFFKNGSTLTQFNELYSLVFISFDRFYQSKKPKSIMEFNTIKKEFETKISQNSDLVQLLRN.

Residues 124–276 enclose the ELMO domain; that stretch reads EHEASLERLW…EFETKISQNS (153 aa).

The sequence is that of ELMO domain-containing protein B (elmoB) from Dictyostelium discoideum (Social amoeba).